A 431-amino-acid polypeptide reads, in one-letter code: UDP-N-acetylglucosamine 1-carboxyvinyltransferase (431 aa).

24-25 (KN) contacts phosphoenolpyruvate. A UDP-N-acetyl-alpha-D-glucosamine-binding site is contributed by R95. The Proton donor role is filled by D119. UDP-N-acetyl-alpha-D-glucosamine-binding residues include D314 and M336.

Belongs to the EPSP synthase family. MurA subfamily.

The protein localises to the cytoplasm. The catalysed reaction is phosphoenolpyruvate + UDP-N-acetyl-alpha-D-glucosamine = UDP-N-acetyl-3-O-(1-carboxyvinyl)-alpha-D-glucosamine + phosphate. Its pathway is cell wall biogenesis; peptidoglycan biosynthesis. In terms of biological role, cell wall formation. Adds enolpyruvyl to UDP-N-acetylglucosamine. This Bradyrhizobium diazoefficiens (strain JCM 10833 / BCRC 13528 / IAM 13628 / NBRC 14792 / USDA 110) protein is UDP-N-acetylglucosamine 1-carboxyvinyltransferase.